The primary structure comprises 359 residues: MPQELVYTLQQLADLLKVEVQGNTETPISGVEEISAAKAHHVTFLDNEKYARFIKITEAGAIILSKAQAQKYGHLNKNFLIVSEFPSIAFQKCIELFISPVDSGFPGIHPTAVIHPTASIGKDVCIEPYAVICQHACIGDSTYIGTGSVIGAYSTLGEHCLVHPKVVVRERVEIGKRVIIQPGAVIGSCGFGYITNAFGRHKHLKHLGKVIIEDDVEIGANTTIDRGRFKNSVIREGTKIDNQVQIAHHVEVGKHSMIVAQAGIAGSTKIGNHVIIGGQTGITGHISITDHVIMMAQTGVTKSISSPGIYGGAPARPYQEIHRQVAKIRSLPKLEERLGMLEEKVKGLSAQSTELQITP.

His-248 serves as the catalytic Proton acceptor.

Belongs to the transferase hexapeptide repeat family. LpxD subfamily. In terms of assembly, homotrimer.

The enzyme catalyses a UDP-3-O-[(3R)-3-hydroxyacyl]-alpha-D-glucosamine + a (3R)-hydroxyacyl-[ACP] = a UDP-2-N,3-O-bis[(3R)-3-hydroxyacyl]-alpha-D-glucosamine + holo-[ACP] + H(+). The protein operates within bacterial outer membrane biogenesis; LPS lipid A biosynthesis. Its function is as follows. Catalyzes the N-acylation of UDP-3-O-acylglucosamine using 3-hydroxyacyl-ACP as the acyl donor. Is involved in the biosynthesis of lipid A, a phosphorylated glycolipid that anchors the lipopolysaccharide to the outer membrane of the cell. The polypeptide is UDP-3-O-acylglucosamine N-acyltransferase (Chlamydia abortus (strain DSM 27085 / S26/3) (Chlamydophila abortus)).